A 508-amino-acid polypeptide reads, in one-letter code: Photosystem II CP47 reaction center protein (508 aa).

Transmembrane regions (helical) follow at residues 21 to 36 (SVHI…WAGS), 101 to 115 (IVFS…IWHW), 140 to 156 (GIHL…FGAF), 203 to 218 (IAAG…FHLS), 237 to 252 (VLSS…AFVV), and 457 to 472 (SFAL…HGAR).

Belongs to the PsbB/PsbC family. PsbB subfamily. PSII is composed of 1 copy each of membrane proteins PsbA, PsbB, PsbC, PsbD, PsbE, PsbF, PsbH, PsbI, PsbJ, PsbK, PsbL, PsbM, PsbT, PsbX, PsbY, PsbZ, Psb30/Ycf12, at least 3 peripheral proteins of the oxygen-evolving complex and a large number of cofactors. It forms dimeric complexes. The cofactor is Binds multiple chlorophylls. PSII binds additional chlorophylls, carotenoids and specific lipids..

It is found in the plastid. Its subcellular location is the chloroplast thylakoid membrane. In terms of biological role, one of the components of the core complex of photosystem II (PSII). It binds chlorophyll and helps catalyze the primary light-induced photochemical processes of PSII. PSII is a light-driven water:plastoquinone oxidoreductase, using light energy to abstract electrons from H(2)O, generating O(2) and a proton gradient subsequently used for ATP formation. In Nasturtium officinale (Watercress), this protein is Photosystem II CP47 reaction center protein.